Here is a 190-residue protein sequence, read N- to C-terminus: Peptide deformylase (190 aa).

The Fe cation site is built by Cys106 and His148. Residue Glu149 is part of the active site. Residue His152 participates in Fe cation binding.

This sequence belongs to the polypeptide deformylase family. Fe(2+) is required as a cofactor.

It carries out the reaction N-terminal N-formyl-L-methionyl-[peptide] + H2O = N-terminal L-methionyl-[peptide] + formate. Removes the formyl group from the N-terminal Met of newly synthesized proteins. Requires at least a dipeptide for an efficient rate of reaction. N-terminal L-methionine is a prerequisite for activity but the enzyme has broad specificity at other positions. This chain is Peptide deformylase, found in Methylacidiphilum infernorum (isolate V4) (Methylokorus infernorum (strain V4)).